The sequence spans 524 residues: Cytochrome P450 monooxygenase drtD (524 aa).

The helical transmembrane segment at 2–22 (SDTYLVAASGLAVCFFVLYLL) threads the bilayer. C418 contacts heme.

This sequence belongs to the cytochrome P450 family. The cofactor is heme.

The protein localises to the membrane. It functions in the pathway secondary metabolite biosynthesis; terpenoid biosynthesis. Its function is as follows. Cytochrome P450 monooxygenase; part of the gene cluster that mediates the biosynthesis of various drimane-type sesquiterpene esters, compounds that exhibit diverse biological activities and are widely present in eukaryotes. The pathway begins with the synthesis of the backbone drimenol by the terpene cyclase drtB using farnesyl pyrophosphate (FPP) as substrate. The cytochrome P450 monooxygenase drtD is then responsible for the hydroxylations at C-6, C-9 and C-12, as well as the oxidation of hydroxyl groups at C-6 and C-11 to a ketone and an aldehyde, respectively. Then, the biosynthesis can go in two directions, either the hydroxylated drimenol is further hydroxylated at C-2 and C-3 by an enzyme(s) not associated with the drt cluster, or the FAD-binding oxidoreductase drtC further oxidizes C-11 or C-12 to form the butyrolactone ring. DrtB, drtD and drtC are solely responsible for the formation of the different drimane structures observed during drimane sesquiterpenes biosynthesis. The polyketide synthase drtA synthesizes different lengths (C6 and C8) of PKS chains, which are then oxidized to varying degrees by the short-chain dehydrogenase drtF. Finally, these PKS chains are transferred onto drimane sesquiterpenes by the acyltransferase drtE, forming the sesquiterpene esters. In addition to the different fatty acyl-CoA chains produced by drtA, drtE is also able to use cinnamoyl-CoA as a substrate. The chain is Cytochrome P450 monooxygenase drtD from Aspergillus calidoustus.